The following is a 235-amino-acid chain: MSIENFPSLNSEEFTEACHHLDRQYCQAPLGSERARWKLRLCNALCTDFSYGGGFTTYVQIRRPLEFDLDHGDLSLDLDGFSFSDEKGPHVSIAEDKDMLDAEEADEAALIRQRARPEIAMVEYEIHLHPTYRVPCLWFTLRNLPADEPAFDVDTVFRRLVPDEYKAGLRTLGNVGGISADHHPITGVPSFFVHPCLLGDAISKFECDRTNYLMIWLGLVGGCVGLWVPKEMAMQ.

C196 (glycyl thioester intermediate) is an active-site residue.

The protein belongs to the ATG10 family. Forms homooligomers. Interacts with ATG7 and ATG12.

The protein resides in the preautophagosomal structure membrane. E2-like enzyme required for the cytoplasm to vacuole transport (Cvt), autophagy and nucleophagy. Acts as an E2-like enzyme that catalyzes the conjugation of ATG12 to ATG5. ATG12 conjugation to ATG5 is required for proper localization of ATG8 to the preautophagosomal structure (PAS). Likely serves as an ATG5-recognition molecule. Autophagy is required for proper vegetative growth, asexual/sexual reproduction, and full virulence. Autophagy is particularly involved in the biosynthesis of deoxynivalenol (DON), an important virulence determinant. The chain is Ubiquitin-like-conjugating enzyme ATG10 from Gibberella zeae (strain ATCC MYA-4620 / CBS 123657 / FGSC 9075 / NRRL 31084 / PH-1) (Wheat head blight fungus).